The sequence spans 421 residues: MDLAVKVKKMGLGHEQGFGAPCLKCKEKCEGFELHFWRKICRNCKCGQEEHDVLLSNEEDRKVGKLFEDTKYTTLIAKLKSDGIPMYKRNVMILTNPVAAKKNVSINTVTYEWAPPVQNQALARHYMQMLPKEKQPVAGSEGAQYRKKQLAKQLPAHDQDPSKCHELSPKEVKEMEQFVKKYKSEALGVGDVKLPREMDAQGPPRIDSPGGDRSTAAAVGAMDGKSAEHRRTQYSCYCCKLSMKEGDPAIYAERAGYDKLWHPACFVCSTCEELLVDMIYFWKNGKLYCGRHYCDSEKPRCAGCDELIFSNEYTQAENQNWHLKHFCCFDCDNILAGEIYVMVDDKPVCKPCYVKNHAVVCQGCHNAIDPEVQRVTYNGFSWHAAAECFLCSCCSKCLLGQKFMPVEGMVFCSVECKKMMS.

The PET domain occupies 92-199 (MILTNPVAAK…GDVKLPREMD (108 aa)). The disordered stretch occupies residues 134 to 164 (KQPVAGSEGAQYRKKQLAKQLPAHDQDPSKC). The segment covering 155-164 (PAHDQDPSKC) has biased composition (basic and acidic residues). 3 consecutive LIM zinc-binding domains span residues 234 to 297 (YSCY…CDSE), 299 to 359 (PRCA…NHAV), and 362 to 421 (QGCH…KMMS).

It belongs to the prickle / espinas / testin family. Interacts via LIM domain 1 with ZYX. Interacts (via LIM domain 3) with ENAH and VASP. Interacts with ALKBH4, talin, actin, alpha-actinin, GRIP1 and PXN. Interacts (via LIM domain 2) with ACTL7A (via N-terminus). Heterodimer with ACTL7A; the heterodimer interacts with ENAH to form a heterotrimer.

Its subcellular location is the cytoplasm. It localises to the cell junction. It is found in the focal adhesion. Its function is as follows. Scaffold protein that may play a role in cell adhesion, cell spreading and in the reorganization of the actin cytoskeleton. Plays a role in the regulation of cell proliferation. May act as a tumor suppressor. The polypeptide is Testin (TES) (Rhinolophus ferrumequinum (Greater horseshoe bat)).